The following is a 209-amino-acid chain: 3-demethoxyubiquinol 3-hydroxylase (209 aa).

The span at 23–36 (PHATRAAPAPAQAP) shows a compositional bias: low complexity. The interval 23–42 (PHATRAAPAPAQAPGEMTDS) is disordered. 6 residues coordinate Fe cation: glutamate 58, glutamate 88, histidine 91, glutamate 140, glutamate 172, and histidine 175.

Belongs to the COQ7 family. It depends on Fe cation as a cofactor.

The protein localises to the cell membrane. It catalyses the reaction a 5-methoxy-2-methyl-3-(all-trans-polyprenyl)benzene-1,4-diol + AH2 + O2 = a 3-demethylubiquinol + A + H2O. It participates in cofactor biosynthesis; ubiquinone biosynthesis. Catalyzes the hydroxylation of 2-nonaprenyl-3-methyl-6-methoxy-1,4-benzoquinol during ubiquinone biosynthesis. The sequence is that of 3-demethoxyubiquinol 3-hydroxylase from Variovorax paradoxus (strain S110).